The primary structure comprises 178 residues: ATP-dependent protease subunit HslV (178 aa).

T5 is an active-site residue. 3 residues coordinate Na(+): G161, C164, and T167.

Belongs to the peptidase T1B family. HslV subfamily. A double ring-shaped homohexamer of HslV is capped on each side by a ring-shaped HslU homohexamer. The assembly of the HslU/HslV complex is dependent on binding of ATP.

It is found in the cytoplasm. The enzyme catalyses ATP-dependent cleavage of peptide bonds with broad specificity.. Its activity is regulated as follows. Allosterically activated by HslU binding. In terms of biological role, protease subunit of a proteasome-like degradation complex believed to be a general protein degrading machinery. In Nitratiruptor sp. (strain SB155-2), this protein is ATP-dependent protease subunit HslV.